An 83-amino-acid chain; its full sequence is uncharacterized protein (83 aa).

The chain crosses the membrane as a helical span at residues 50–70 (IMVFLGEAWIILIPFAIFCII).

The protein belongs to the plectrovirus ORF7 family.

It is found in the host membrane. This is an uncharacterized protein from Spiroplasma melliferum (SpV1).